The chain runs to 629 residues: Nicotinic receptor-associated protein 1 (629 aa).

C2 domains follow at residues 1-144 (MNQP…KAHL) and 162-299 (RTGS…ELLL). Positions 33, 39, 108, 110, 122, 192, 198, 254, 256, and 274 each coordinate Ca(2+). Positions 342 to 561 (EFAVAVDFTA…LDPDVVQENL (220 aa)) constitute a VWFA domain. Disordered regions lie at residues 581 to 600 (GFQPRPVENPWTRNSPPPDY) and 607 to 629 (IGRRAQAPSPGFQMPVASAPPMY).

This sequence belongs to the copine family. As to quaternary structure, interacts with nicotinic acetylcholine receptor. It depends on Ca(2+) as a cofactor.

The protein localises to the cell membrane. Exhibits calcium-dependent phospholipid binding properties. May function in membrane trafficking. Regulates synaptic levels of nicotinic acetylcholine receptor subunit lev-1 and unc-38 in the nerve cord. Involved in nicotinic acetylcholine receptor (nAChR)-mediated sensitivity to nicotine and levamisole. Affects directional sperm motility. This Caenorhabditis briggsae protein is Nicotinic receptor-associated protein 1.